The sequence spans 273 residues: Coiled-coil domain-containing protein 3 (273 aa).

The first 21 residues, 1 to 21 (MPLPLLLAALCLAASPAPARA), serve as a signal peptide directing secretion. N100 carries N-linked (GlcNAc...) asparagine glycosylation. Residues 188–250 (SVQKALFEEE…VNQKLNEKLG (63 aa)) adopt a coiled-coil conformation.

As to quaternary structure, homodimer. In terms of processing, N-glycosylated. In terms of tissue distribution, expressed in aorta and adipose tissue. Enriched in mature adipocytes. Over-expressed in adipose tissue from either hormonally-induced or nutritionally-regulated obese mice models.

It localises to the secreted. Functionally, negatively regulates TNF-alpha-induced pro-inflammatory response in endothelial cells (ECs) via inhibition of TNF-alpha-induced NF-kappaB activation in ECs. Positively regulates lipid accumulation in adipose cells. The sequence is that of Coiled-coil domain-containing protein 3 (Ccdc3) from Mus musculus (Mouse).